Here is a 452-residue protein sequence, read N- to C-terminus: ADP-dependent glucose/glucosamine kinase (452 aa).

One can recognise an ADPK domain in the interval 1-452 (MSWDEMYRDA…AFVSEFSLSS (452 aa)). Residues Asp-33, Glu-87, 111–112 (GQ), and His-174 each bind D-glucose. Glu-264 lines the Mg(2+) pocket. Residue Asn-290 participates in ADP binding. Position 293 (Glu-293) interacts with Mg(2+). ADP contacts are provided by residues 339-340 (HT), Val-426, and Gly-436. Asp-437 provides a ligand contact to D-glucose. Asp-437 contacts Mg(2+). Residue Asp-437 is the Proton acceptor of the active site.

Belongs to the ADP-dependent glucokinase family. Requires Mg(2+) as cofactor.

Its subcellular location is the cytoplasm. The catalysed reaction is D-glucose + ADP = D-glucose 6-phosphate + AMP + H(+). It carries out the reaction D-glucosamine + ADP = D-glucosamine 6-phosphate + AMP + H(+). The protein operates within carbohydrate degradation; glycolysis. In terms of biological role, catalyzes the ADP-dependent phosphorylation of D-glucose to D-glucose 6-phosphate and glucosamine to glucosamine 6-phosphate. The sequence is that of ADP-dependent glucose/glucosamine kinase from Pyrococcus abyssi (strain GE5 / Orsay).